Consider the following 68-residue polypeptide: uncharacterized protein (68 aa).

This is an uncharacterized protein from Enterobacteria phage T4 (Bacteriophage T4).